Consider the following 161-residue polypeptide: General odorant-binding protein 2 (161 aa).

The signal sequence occupies residues 1–20; it reads MVNRLILMVVVVFITDSVMG. Intrachain disulfides connect C39–C74, C70–C128, and C117–C137.

The protein belongs to the PBP/GOBP family. Homodimer. In terms of tissue distribution, olfactory tissue; expressed by the glia-like support cells that ensheathe the sensory neurons and line the base of the sensillum lumen.

Its function is as follows. Present in the aqueous fluid surrounding olfactory sensory dendrites and are thought to aid in the capture and transport of hydrophobic odorants into and through this fluid. This is General odorant-binding protein 2 (GOBP2) from Manduca sexta (Tobacco hawkmoth).